The following is a 304-amino-acid chain: MRLLPEWLLLLFGPWLLRKVISGQIVESGRPQYLDLRPAMAGGGARGQQLPVPASSEGLNPVRSWSWAWPANHTGALARPGAAGGPPVPRTKRKPSIKAARAKKIFGWGDFYFRVHTLKFSLLVTGKIVDHVNGTFSVYFRHNSSSLGNLSVSIVPPSKRVEFGGVWLPGPAPHPLQSTLALEGVLPGLGPPLGMAGQGLGGNLGGALAGPLGGALGVPGAKESRAFNCHVEYEKTNRARKHRPCLYDPSQVCFTEHTQSQAAWLCAKPFKVICIFVSFLSFDYKLVQKVCPDYNFQSEHPYFG.

Positions Met1–Gly23 are cleaved as a signal peptide. The tract at residues Gln24–Gly84 is II. 4 N-linked (GlcNAc...) asparagine glycosylation sites follow: Asn72, Asn133, Asn143, and Asn149. The III stretch occupies residues Gly85 to Phe163. Residues Gly164–Gly220 form an IV (linker domain) region. Positions Ala221–Gly304 are v (Cys-rich).

This sequence belongs to the neurexophilin family. In terms of processing, may be proteolytically processed in neuron-like cells. In terms of tissue distribution, brain and kidney.

It localises to the secreted. May be signaling molecules that resemble neuropeptides and that act by binding to alpha-neurexins and possibly other receptors. The chain is Neurexophilin-4 (Nxph4) from Rattus norvegicus (Rat).